Consider the following 291-residue polypeptide: Phosphatidylglycerol--prolipoprotein diacylglyceryl transferase (291 aa).

7 consecutive transmembrane segments (helical) span residues 21–41, 60–80, 96–116, 130–150, 198–218, 225–245, and 260–280; these read VSLHWYGLMYLVGFVFAMWLA, LLYAGFLGVFLGGRIGYVLFY, WDGGMSFHGGLIGVICVMIWF, FIAPLIPFGLGAGRLGNFING, SQLYELFLEGIVLFIILNLFI, GAVSGLFLIGYGAFRIIVEFF, and ISMGQILSIPMIVAGAAMMIW. Position 143 (R143) interacts with a 1,2-diacyl-sn-glycero-3-phospho-(1'-sn-glycerol).

This sequence belongs to the Lgt family.

It localises to the cell inner membrane. It carries out the reaction L-cysteinyl-[prolipoprotein] + a 1,2-diacyl-sn-glycero-3-phospho-(1'-sn-glycerol) = an S-1,2-diacyl-sn-glyceryl-L-cysteinyl-[prolipoprotein] + sn-glycerol 1-phosphate + H(+). It participates in protein modification; lipoprotein biosynthesis (diacylglyceryl transfer). Functionally, catalyzes the transfer of the diacylglyceryl group from phosphatidylglycerol to the sulfhydryl group of the N-terminal cysteine of a prolipoprotein, the first step in the formation of mature lipoproteins. The polypeptide is Phosphatidylglycerol--prolipoprotein diacylglyceryl transferase (Cronobacter sakazakii (strain ATCC BAA-894) (Enterobacter sakazakii)).